The sequence spans 298 residues: Nucleotide-binding protein MAV_3359 (298 aa).

18 to 25 (GLSGAGRG) is a binding site for ATP. 69–72 (DVRS) lines the GTP pocket.

It belongs to the RapZ-like family.

Functionally, displays ATPase and GTPase activities. In Mycobacterium avium (strain 104), this protein is Nucleotide-binding protein MAV_3359.